The sequence spans 1370 residues: MAYSIANNQLLRKNFAKIKKIIDIPNLIDIQKNSYKRFLQIDTPPEARKNSGLEAVFKSVFPIKDFSDTASLEYVTYTLGAPKYDVEECHQRGMTFAAPMKVKVRLVVWDVNKDTGVRSIRDIKEQEVYFGEIPLMTENGTFIINGTERVIVSQLHRSPGVFYDHDKGKTHSSGKVLYSARVIPYRGSWLDFEFDHKDILFVRIDRRRKMPATVLLKALGYSAEALLNYFYKSEEILVAAEGMWKKADPELLASQKASVDIVAPKTGEVLLKANRKFTKAAIRKMTEHGITQIPITMEEVLGKYASNDIVDPSTGEVIVECNDEITQARLDDIKAKGITEFKVLFIDNLHVTSSLRDTLIADKIAATEEALIEIYRRLRPGDPPTLKSAQALFENLFFNAERYDLSAVGRLKLNFKLGLNVPLDCQTLTKDDVLEVVRYLIDLKNGKGTIDDIDHLGNRRVRAVGELLENQYRIGLVRMERAIKERMSLQEVENLMPHDLINSKPVSAVVKEFFGSSQLSQFMDQTNPLSEVTHKRRLSALGPGGLTRERAGFEVRDVHPTHYGRVCPIETPEGPNIGLIASLSTYARINEHGFVETPYRIVQDGKVTSDVKFFSALEEEGHAIAQANAEMDADGRFVNEYVSARKSGEFLLVHRDELELMDVAPMQLVSVAASLIPFLENDDANRALMGSNMQRQAVPLLKADSPLVGTGMERVVAKDSGVSVVARHTGIVESVDASRIVVKIDEDEFDETGTGVDIYNLIKFARSNQNTCINQRPVVKVGDHVKRGDVIADGPSTDMGELALGQNVVVAFMPWGGYNFEDSILVSEKLVKDDRYTSIHIEEFECVARDTKLGKEEITSDIPNLGEEALKDLDESGIIRIGAEVKPGDILVGKITPKGETQLSPEEKLLRAIFGEKAGDVRDTSLRVPPGVEGTVIGAKIFSRKGADKDSRTEMIERMEEDKLRKDEQDEIRIIRNSAVGKLKKLLVGKSAAVKVEDKSGRTVIAKGAAITEEALDAIPLDRWDEISVSGEAGVDEKVSAILQTLQQQIDIIRYVFDDKVQKLKRGDDLPPGVIKMVKVYIAIKRKLQVGDKMAGRHGNKGVVSRILPEEDMPYMEDGRPVEIVLNPLGVPSRMNVGQILETHLGWAAKGIGWKIEEMLESYSPADHIKGYLKDVYGTTEMDTFLDSLDKDELMNVAKRLQRGVAMASPVFEGASEEQIRSMLDKAGFDETAQVSLYDGKSGEPFKHKVTVGVMYVLKLHHLVDDKIHARSIGPYSLVTQQPLGGKAQFGGQRLGEMEVWAMEAYGAAYALQEFLTVKSDDVAGRTRMYEAIVKGKHTLEPGLPESFNVLIKELQSLCLDVELLEGDED.

The protein belongs to the RNA polymerase beta chain family. The RNAP catalytic core consists of 2 alpha, 1 beta, 1 beta' and 1 omega subunit. When a sigma factor is associated with the core the holoenzyme is formed, which can initiate transcription.

The catalysed reaction is RNA(n) + a ribonucleoside 5'-triphosphate = RNA(n+1) + diphosphate. Its function is as follows. DNA-dependent RNA polymerase catalyzes the transcription of DNA into RNA using the four ribonucleoside triphosphates as substrates. The protein is DNA-directed RNA polymerase subunit beta of Geobacter sulfurreducens (strain ATCC 51573 / DSM 12127 / PCA).